A 343-amino-acid polypeptide reads, in one-letter code: S-adenosylmethionine:tRNA ribosyltransferase-isomerase (343 aa).

It belongs to the QueA family. As to quaternary structure, monomer.

The protein resides in the cytoplasm. The catalysed reaction is 7-aminomethyl-7-carbaguanosine(34) in tRNA + S-adenosyl-L-methionine = epoxyqueuosine(34) in tRNA + adenine + L-methionine + 2 H(+). Its pathway is tRNA modification; tRNA-queuosine biosynthesis. Functionally, transfers and isomerizes the ribose moiety from AdoMet to the 7-aminomethyl group of 7-deazaguanine (preQ1-tRNA) to give epoxyqueuosine (oQ-tRNA). This Geobacter sulfurreducens (strain ATCC 51573 / DSM 12127 / PCA) protein is S-adenosylmethionine:tRNA ribosyltransferase-isomerase.